A 345-amino-acid chain; its full sequence is D-amino-acid oxidase (345 aa).

Ser-10, Ile-13, Ser-49, Gly-53, and Asn-55 together coordinate FAD. The (R)-lactate site is built by Tyr-230 and Arg-290. Residues Tyr-230 and Arg-290 each contribute to the anthranilate site. Residues Arg-290, Ser-317, Gly-320, Tyr-321, and Gln-322 each contribute to the FAD site. The Microbody targeting signal motif lies at 343 to 345; the sequence is AKL.

This sequence belongs to the DAMOX/DASOX family. It depends on FAD as a cofactor.

It localises to the peroxisome matrix. The enzyme catalyses a D-alpha-amino acid + O2 + H2O = a 2-oxocarboxylate + H2O2 + NH4(+). It carries out the reaction D-methionine + O2 + H2O = 4-methylsulfanyl-2-oxobutanoate + H2O2 + NH4(+). Functionally, catalyzes the oxidative deamination of D-amino acids with broad substrate specificity. Enables the organism to utilize D-amino acids as a source of nutrients. Enables the organism to utilize D-alanine as a nitrogen source, although it is not strictly required for this process. Also enables utilization of D-alanine as a carbon source. In Candida boidinii (Yeast), this protein is D-amino-acid oxidase.